We begin with the raw amino-acid sequence, 632 residues long: ATP-dependent zinc metalloprotease FtsH (632 aa).

At 1-9 (MKPTNEPKK) the chain is on the cytoplasmic side. A helical transmembrane segment spans residues 10 to 30 (PFFQSPIILAVLGGILLIFFL). Over 31-116 (RSFNSDGSFS…INYSGFSESN (86 aa)) the chain is Periplasmic. A helical membrane pass occupies residues 117-137 (FFTDMLGWLMPILVILGLWMF). Topologically, residues 138–632 (MANRMQKNMG…RLIPLEEQAS (495 aa)) are cytoplasmic. Residues A173, 213-217 (GTGKT), and H354 contribute to the ATP site. H434 serves as a coordination point for Zn(2+). Residue E435 is part of the active site. Zn(2+) contacts are provided by H438 and D511.

It in the central section; belongs to the AAA ATPase family. The protein in the C-terminal section; belongs to the peptidase M41 family. In terms of assembly, homohexamer. It depends on Zn(2+) as a cofactor.

Its subcellular location is the cell inner membrane. Its function is as follows. Acts as a processive, ATP-dependent zinc metallopeptidase for both cytoplasmic and membrane proteins. Plays a role in the quality control of integral membrane proteins. The sequence is that of ATP-dependent zinc metalloprotease FtsH from Helicobacter pylori (strain ATCC 700392 / 26695) (Campylobacter pylori).